We begin with the raw amino-acid sequence, 51 residues long: Large ribosomal subunit protein eL39 (51 aa).

The protein belongs to the eukaryotic ribosomal protein eL39 family.

This chain is Large ribosomal subunit protein eL39 (rpl39e), found in Methanothermobacter thermautotrophicus (strain ATCC 29096 / DSM 1053 / JCM 10044 / NBRC 100330 / Delta H) (Methanobacterium thermoautotrophicum).